A 486-amino-acid chain; its full sequence is Hexokinase-2 (486 aa).

Phosphoserine is present on serine 15. The Hexokinase domain occupies 21–469 (KELMQQIENF…SGAGAAVIAA (449 aa)). Threonine 38 bears the Phosphothreonine mark. The segment at 75-209 (TGKESGDFLA…NIPIEVVALI (135 aa)) is hexokinase small subdomain. ATP is bound by residues 86–91 (DLGGTN) and lysine 111. Serine 158 carries the post-translational modification Phosphoserine. Residues serine 158, 175–176 (TK), 210–211 (ND), and asparagine 237 each bind substrate. The segment at 210 to 458 (NDTTGTLVAS…YPIKIVPAED (249 aa)) is hexokinase large subdomain. Serine 245 bears the Phosphoserine mark. Glutamate 269 contributes to the substrate binding site. Position 272 is a phosphoserine (serine 272). Glutamate 302 is a substrate binding site. ATP-binding positions include 307–308 (GY), 344–348 (TSYPA), and 419–423 (SVYNR).

Belongs to the hexokinase family. In terms of assembly, homodimer.

The enzyme catalyses a D-hexose + ATP = a D-hexose 6-phosphate + ADP + H(+). It carries out the reaction D-fructose + ATP = D-fructose 6-phosphate + ADP + H(+). The catalysed reaction is D-glucose + ATP = D-glucose 6-phosphate + ADP + H(+). It participates in carbohydrate metabolism; hexose metabolism. Its pathway is carbohydrate degradation; glycolysis; D-glyceraldehyde 3-phosphate and glycerone phosphate from D-glucose: step 1/4. Its activity is regulated as follows. Subject to allosteric control. Substrate inhibition by ATP. Its function is as follows. Catalyzes the phosphorylation of hexose, such as D-glucose and D-fructose, to hexose 6-phosphate (D-glucose 6-phosphate and D-fructose 6-phosphate, respectively). Mediates the initial step of glycolysis by catalyzing phosphorylation of D-glucose to D-glucose 6-phosphate. This Saccharomyces cerevisiae (strain ATCC 204508 / S288c) (Baker's yeast) protein is Hexokinase-2 (HXK2).